The sequence spans 185 residues: Calcium-binding protein CML37 (185 aa).

Positions M1–S12 are enriched in polar residues. The interval M1 to L45 is disordered. Basic and acidic residues predominate over residues K21–R34. Residues T35–S44 show a composition bias toward low complexity. EF-hand domains are found at residues L45 to A80, L81 to S116, E119 to S154, and C155 to R185. Residues D58, N60, D62, K64, E69, D94, D96, D98, and E105 each contribute to the Ca(2+) site. Residues D168, N170, D172, and E179 each coordinate Ca(2+).

In terms of assembly, binds to ABCG36. In terms of tissue distribution, expressed in cotyledons, stipule, young leaves and at the hypocotyl-root junction. In mature root, expressed in the stele, cortex, emerging lateral root, root tip and root cap. In mature plant, expressed at the base of cauline and floral branches, and in rosette and cauline leaves. Expressed from stage 9 to 14 of flower development in anthers. At stage 15, expressed in carpel, sepals, petals and pollen until dehiscence. Expressed in developing seeds and young siliques.

In terms of biological role, potential calcium sensor that binds calcium in vitro. This is Calcium-binding protein CML37 from Arabidopsis thaliana (Mouse-ear cress).